We begin with the raw amino-acid sequence, 396 residues long: Tryptophan synthase beta chain (396 aa).

Lys-88 is subject to N6-(pyridoxal phosphate)lysine.

Belongs to the TrpB family. As to quaternary structure, tetramer of two alpha and two beta chains. It depends on pyridoxal 5'-phosphate as a cofactor.

It catalyses the reaction (1S,2R)-1-C-(indol-3-yl)glycerol 3-phosphate + L-serine = D-glyceraldehyde 3-phosphate + L-tryptophan + H2O. The protein operates within amino-acid biosynthesis; L-tryptophan biosynthesis; L-tryptophan from chorismate: step 5/5. The beta subunit is responsible for the synthesis of L-tryptophan from indole and L-serine. This Shewanella sp. (strain ANA-3) protein is Tryptophan synthase beta chain.